Reading from the N-terminus, the 381-residue chain is Chymosin (381 aa).

An N-terminal signal peptide occupies residues 1–16 (MRCLVVLLAALALSQA). Positions 17 to 58 (SGITRIPLHKGKTLRKALKERGLLEDFLQRQQYAVSSKYSSL) are cleaved as a propeptide — activation peptide. Residues 74-378 (YFGKIYIGTP…DRANNRVGLA (305 aa)) form the Peptidase A1 domain. Aspartate 92 is an active-site residue. Cysteine 105 and cysteine 110 are disulfide-bonded. Asparagine 158 carries N-linked (GlcNAc...) asparagine glycosylation. Residues cysteine 265 and cysteine 269 are joined by a disulfide bond. Aspartate 274 is an active-site residue. Cysteine 308 and cysteine 341 form a disulfide bridge. N-linked (GlcNAc...) asparagine glycosylation occurs at asparagine 349.

This sequence belongs to the peptidase A1 family.

It carries out the reaction Broad specificity similar to that of pepsin A. Clots milk by cleavage of a single 104-Ser-Phe-|-Met-Ala-107 bond in kappa-chain of casein.. Functionally, chymosin is synthesized in the mucosa of the abomasum (fourth stomach) of young (unweaned) ruminants. The enzyme hydrolyzes casein to paracasein. This Camelus dromedarius (Dromedary) protein is Chymosin.